Here is a 759-residue protein sequence, read N- to C-terminus: Phosphoribosylformylglycinamidine synthase subunit PurL (759 aa).

The active site involves histidine 48. Tyrosine 51 and lysine 91 together coordinate ATP. Glutamate 93 is a Mg(2+) binding site. Substrate is bound by residues 94 to 97 (SHNH) and arginine 116. The Proton acceptor role is filled by histidine 95. Aspartate 117 is a Mg(2+) binding site. Glutamine 240 provides a ligand contact to substrate. Aspartate 268 serves as a coordination point for Mg(2+). 317 to 319 (ESQ) is a binding site for substrate. Positions 501 and 538 each coordinate ATP. Residue asparagine 539 coordinates Mg(2+). Serine 541 contacts substrate.

Belongs to the FGAMS family. In terms of assembly, monomer. Part of the FGAM synthase complex composed of 1 PurL, 1 PurQ and 2 PurS subunits.

Its subcellular location is the cytoplasm. The enzyme catalyses N(2)-formyl-N(1)-(5-phospho-beta-D-ribosyl)glycinamide + L-glutamine + ATP + H2O = 2-formamido-N(1)-(5-O-phospho-beta-D-ribosyl)acetamidine + L-glutamate + ADP + phosphate + H(+). Its pathway is purine metabolism; IMP biosynthesis via de novo pathway; 5-amino-1-(5-phospho-D-ribosyl)imidazole from N(2)-formyl-N(1)-(5-phospho-D-ribosyl)glycinamide: step 1/2. Functionally, part of the phosphoribosylformylglycinamidine synthase complex involved in the purines biosynthetic pathway. Catalyzes the ATP-dependent conversion of formylglycinamide ribonucleotide (FGAR) and glutamine to yield formylglycinamidine ribonucleotide (FGAM) and glutamate. The FGAM synthase complex is composed of three subunits. PurQ produces an ammonia molecule by converting glutamine to glutamate. PurL transfers the ammonia molecule to FGAR to form FGAM in an ATP-dependent manner. PurS interacts with PurQ and PurL and is thought to assist in the transfer of the ammonia molecule from PurQ to PurL. This chain is Phosphoribosylformylglycinamidine synthase subunit PurL, found in Chlorobaculum tepidum (strain ATCC 49652 / DSM 12025 / NBRC 103806 / TLS) (Chlorobium tepidum).